The sequence spans 145 residues: Methylglyoxal synthase (145 aa).

The region spanning 1-145 (MNSKKKIALV…YYQKIRKDNF (145 aa)) is the MGS-like domain. Substrate is bound by residues histidine 12, lysine 16, 38–41 (TGTT), and 58–59 (SG). Aspartate 64 (proton donor/acceptor) is an active-site residue. Residue histidine 91 participates in substrate binding.

It belongs to the methylglyoxal synthase family.

The catalysed reaction is dihydroxyacetone phosphate = methylglyoxal + phosphate. In terms of biological role, catalyzes the formation of methylglyoxal from dihydroxyacetone phosphate. This chain is Methylglyoxal synthase, found in Clostridium acetobutylicum (strain ATCC 824 / DSM 792 / JCM 1419 / IAM 19013 / LMG 5710 / NBRC 13948 / NRRL B-527 / VKM B-1787 / 2291 / W).